A 332-amino-acid polypeptide reads, in one-letter code: Phenylalanine--tRNA ligase alpha subunit (332 aa).

Mg(2+) is bound at residue Glu252.

It belongs to the class-II aminoacyl-tRNA synthetase family. Phe-tRNA synthetase alpha subunit type 1 subfamily. As to quaternary structure, tetramer of two alpha and two beta subunits. Mg(2+) serves as cofactor.

The protein resides in the cytoplasm. It catalyses the reaction tRNA(Phe) + L-phenylalanine + ATP = L-phenylalanyl-tRNA(Phe) + AMP + diphosphate + H(+). The polypeptide is Phenylalanine--tRNA ligase alpha subunit (Marinobacter nauticus (strain ATCC 700491 / DSM 11845 / VT8) (Marinobacter aquaeolei)).